Reading from the N-terminus, the 480-residue chain is NADH-quinone oxidoreductase subunit N (480 aa).

14 helical membrane passes run 11–31, 38–58, 76–96, 105–125, 128–148, 163–183, 195–215, 240–260, 270–290, 298–318, 329–349, 368–388, 407–427, and 453–473; these read LLPE…GVFA, LVAA…AGLL, FALY…IAAA, APEY…LVSM, LFGV…MVAF, LITG…IYGV, AFGE…ISGL, AAFL…RILL, WTAL…LLAL, MLAY…AALQ, VMIY…TIDL, AAAM…SGFF, VAVA…FGII, and VYAM…LAAL.

This sequence belongs to the complex I subunit 2 family. NDH-1 is composed of 14 different subunits. Subunits NuoA, H, J, K, L, M, N constitute the membrane sector of the complex.

Its subcellular location is the cell membrane. The catalysed reaction is a quinone + NADH + 5 H(+)(in) = a quinol + NAD(+) + 4 H(+)(out). NDH-1 shuttles electrons from NADH, via FMN and iron-sulfur (Fe-S) centers, to quinones in the respiratory chain. The immediate electron acceptor for the enzyme in this species is believed to be a menaquinone. Couples the redox reaction to proton translocation (for every two electrons transferred, four hydrogen ions are translocated across the cytoplasmic membrane), and thus conserves the redox energy in a proton gradient. This Rubrobacter xylanophilus (strain DSM 9941 / JCM 11954 / NBRC 16129 / PRD-1) protein is NADH-quinone oxidoreductase subunit N.